Consider the following 314-residue polypeptide: MTKRKIVVALGGNAILSTDASANAQIKAVKETVKQLVAFVKQGDQLIISHGNGPQVGNLLIQQAASDSEKTPAMPLDTVGAMSQGEIGYWMQNAFNEVLAEEGLALDVATIVTQTIVDAKDEAFQNPTKPIGPFYSEAEAKKQQSINPEAHFVEDAGRGWRRVVPSPRPIGIQEAPVIQKLVEGNVITISAGGGGVPVAKEGNKLRGVEAVIDKDFASEKLAELVGADMLIILTAVDNVYVNFNKPDQKKLTNVSVAELEDYIKDDQFAKGSMLPKIQTAIEYVNNRPDSKAIITSLDNVKNLLAHDAGTIITK.

Belongs to the carbamate kinase family.

It is found in the cytoplasm. The catalysed reaction is hydrogencarbonate + NH4(+) + ATP = carbamoyl phosphate + ADP + H2O + H(+). The protein operates within metabolic intermediate metabolism; carbamoyl phosphate degradation; CO(2) and NH(3) from carbamoyl phosphate: step 1/1. The protein is Carbamate kinase (arcC) of Latilactobacillus sakei (Lactobacillus sakei).